The sequence spans 95 residues: Co-chaperonin GroES (95 aa).

The protein belongs to the GroES chaperonin family. In terms of assembly, heptamer of 7 subunits arranged in a ring. Interacts with the chaperonin GroEL.

It localises to the cytoplasm. Functionally, together with the chaperonin GroEL, plays an essential role in assisting protein folding. The GroEL-GroES system forms a nano-cage that allows encapsulation of the non-native substrate proteins and provides a physical environment optimized to promote and accelerate protein folding. GroES binds to the apical surface of the GroEL ring, thereby capping the opening of the GroEL channel. This is Co-chaperonin GroES from Alkalilimnicola ehrlichii (strain ATCC BAA-1101 / DSM 17681 / MLHE-1).